The sequence spans 152 residues: D-aminoacyl-tRNA deacylase (152 aa).

Residues 142–143 (GP) carry the Gly-cisPro motif, important for rejection of L-amino acids motif.

This sequence belongs to the DTD family. As to quaternary structure, homodimer.

The protein resides in the cytoplasm. It catalyses the reaction glycyl-tRNA(Ala) + H2O = tRNA(Ala) + glycine + H(+). The enzyme catalyses a D-aminoacyl-tRNA + H2O = a tRNA + a D-alpha-amino acid + H(+). Functionally, an aminoacyl-tRNA editing enzyme that deacylates mischarged D-aminoacyl-tRNAs. Also deacylates mischarged glycyl-tRNA(Ala), protecting cells against glycine mischarging by AlaRS. Acts via tRNA-based rather than protein-based catalysis; rejects L-amino acids rather than detecting D-amino acids in the active site. By recycling D-aminoacyl-tRNA to D-amino acids and free tRNA molecules, this enzyme counteracts the toxicity associated with the formation of D-aminoacyl-tRNA entities in vivo and helps enforce protein L-homochirality. This is D-aminoacyl-tRNA deacylase from Paraburkholderia phytofirmans (strain DSM 17436 / LMG 22146 / PsJN) (Burkholderia phytofirmans).